The chain runs to 57 residues: UPF0391 membrane protein RPD_3366 (57 aa).

A run of 2 helical transmembrane segments spans residues 4–24 and 30–50; these read WVVTFLVVALIAGILGFGGIA and IAKVIFFIAVVLFLISAVVGL.

It belongs to the UPF0391 family.

It localises to the cell membrane. The polypeptide is UPF0391 membrane protein RPD_3366 (Rhodopseudomonas palustris (strain BisB5)).